The following is a 171-amino-acid chain: Protein-export protein SecB (171 aa).

This sequence belongs to the SecB family. In terms of assembly, homotetramer, a dimer of dimers. One homotetramer interacts with 1 SecA dimer.

The protein resides in the cytoplasm. In terms of biological role, one of the proteins required for the normal export of preproteins out of the cell cytoplasm. It is a molecular chaperone that binds to a subset of precursor proteins, maintaining them in a translocation-competent state. It also specifically binds to its receptor SecA. The chain is Protein-export protein SecB from Histophilus somni (strain 2336) (Haemophilus somnus).